We begin with the raw amino-acid sequence, 349 residues long: Terpene cyclase rstn5 (349 aa).

The next 5 membrane-spanning stretches (helical) occupy residues 4 to 24, 81 to 101, 116 to 136, 158 to 178, and 181 to 201; these read LTPLIFLSLAMAAAVGVWGVF, FMVQFLANVAVIPVILNTEGA, GLFSQMATSAVMCPLYGFWFV, VVPSSVLIGYGIPALLSFDPF, and GLDLQIRGILAFTLYPLCISL. N-linked (GlcNAc...) asparagine glycosylation is present at Asn222. 3 consecutive transmembrane segments (helical) span residues 228–248, 271–291, and 309–329; these read VAVGVVGMVSHLWYLGTGLTG, LVLLFLQIDYVITFAAMLLLA, and TLAVGWLFLGPGATLAAAWAL.

Belongs to the membrane-bound ascI terpene cyclase family.

It localises to the membrane. Its pathway is antifungal biosynthesis. In terms of biological role, cyclase; part of the gene cluster that mediates the biosynthesis of the tetrahydropyranyl antifungal agent restricticin that acts as an inhibitor of CYP51 and blocks the ergosterol biosynthesis. The highly reducing polyketide synthase rstn3, the short chain dehydrogenase rstn4, the cyclase rstn5, the FAD-dependent monooxygenase rstn6 and the enoylreductase rstn7 are required to generate the first stable intermediate desmethylrestrictinol. Rstn3 with rstn7 biosynthesize the first polyketide chain intermediate that is reduced by rstn4, followed by epoxidation by rstn6 before 6-endo cyclization via epoxide opening by rstn5 leads to desmethylrestrictinol. The methyltransferase rstn1 then catalyzes the C4 O-methylation of desmethylrestrictinol to produce restrictinol, and the nonribosomal peptide synthetase rstn8 catalyzes the C3 esterification of restrictinol with glycine that leads to restricticin. This chain is Terpene cyclase rstn5, found in Aspergillus nomiae NRRL (strain ATCC 15546 / NRRL 13137 / CBS 260.88 / M93).